The primary structure comprises 313 residues: uncharacterized protein (313 aa).

This is an uncharacterized protein from Bacillus subtilis (strain 168).